A 302-amino-acid polypeptide reads, in one-letter code: tRNA-cytidine(32) 2-sulfurtransferase (302 aa).

The short motif at serine 43–serine 48 is the PP-loop motif element. The [4Fe-4S] cluster site is built by cysteine 118, cysteine 121, and cysteine 209.

Belongs to the TtcA family. Homodimer. Requires Mg(2+) as cofactor. [4Fe-4S] cluster is required as a cofactor.

The protein resides in the cytoplasm. It catalyses the reaction cytidine(32) in tRNA + S-sulfanyl-L-cysteinyl-[cysteine desulfurase] + AH2 + ATP = 2-thiocytidine(32) in tRNA + L-cysteinyl-[cysteine desulfurase] + A + AMP + diphosphate + H(+). Its pathway is tRNA modification. Functionally, catalyzes the ATP-dependent 2-thiolation of cytidine in position 32 of tRNA, to form 2-thiocytidine (s(2)C32). The sulfur atoms are provided by the cysteine/cysteine desulfurase (IscS) system. The polypeptide is tRNA-cytidine(32) 2-sulfurtransferase (Polynucleobacter asymbioticus (strain DSM 18221 / CIP 109841 / QLW-P1DMWA-1) (Polynucleobacter necessarius subsp. asymbioticus)).